Consider the following 61-residue polypeptide: Photosystem II reaction center protein K (61 aa).

Positions 1–24 (MLNIFSLMYICLNSALYSSSFLFA) are excised as a propeptide. The chain crosses the membrane as a helical span at residues 40–60 (MPVIPVLFFLLAFVWQAAVSF).

Belongs to the PsbK family. PSII is composed of 1 copy each of membrane proteins PsbA, PsbB, PsbC, PsbD, PsbE, PsbF, PsbH, PsbI, PsbJ, PsbK, PsbL, PsbM, PsbT, PsbX, PsbY, PsbZ, Psb30/Ycf12, at least 3 peripheral proteins of the oxygen-evolving complex and a large number of cofactors. It forms dimeric complexes.

The protein localises to the plastid. Its subcellular location is the chloroplast thylakoid membrane. Functionally, one of the components of the core complex of photosystem II (PSII). PSII is a light-driven water:plastoquinone oxidoreductase that uses light energy to abstract electrons from H(2)O, generating O(2) and a proton gradient subsequently used for ATP formation. It consists of a core antenna complex that captures photons, and an electron transfer chain that converts photonic excitation into a charge separation. In Citrus sinensis (Sweet orange), this protein is Photosystem II reaction center protein K.